Reading from the N-terminus, the 363-residue chain is Osmoprotective compounds uptake ATP-binding protein GgtA (363 aa).

In terms of domain architecture, ABC transporter spans 4-234 (VSFEQVTKQF…PANLFVAGFI (231 aa)). Residue 36 to 43 (GPSGCGKT) participates in ATP binding.

It belongs to the ABC transporter superfamily. The complex is composed of two ATP-binding proteins (GgtA), two transmembrane proteins (GgtC and GgtD) and a solute-binding protein (GgtB).

It is found in the cell membrane. Part of the ABC transporter complex GgtABCD involved in the uptake of the osmoprotective compounds glucosylglycerol (GG), sucrose and trehalose. Responsible for energy coupling to the transport system. This is Osmoprotective compounds uptake ATP-binding protein GgtA from Synechocystis sp. (strain ATCC 27184 / PCC 6803 / Kazusa).